A 98-amino-acid chain; its full sequence is Putative septation protein SpoVG (98 aa).

The protein belongs to the SpoVG family.

In terms of biological role, essential for sporulation. Interferes with or is a negative regulator of the pathway leading to asymmetric septation. This is Putative septation protein SpoVG from Bacillus pumilus (strain SAFR-032).